A 161-amino-acid chain; its full sequence is Nucleotide-binding protein lpl1175 (161 aa).

It belongs to the YajQ family.

Functionally, nucleotide-binding protein. The chain is Nucleotide-binding protein lpl1175 from Legionella pneumophila (strain Lens).